We begin with the raw amino-acid sequence, 234 residues long: GTP-binding protein YPT52 (234 aa).

GTP contacts are provided by residues 10–17 (GDSSVGKS), 66–70 (DTAGQ), and 111–114 (NKVG). 2 disordered regions span residues 131 to 151 (QETP…EEQK) and 206 to 234 (NRQI…SCCS). Residues 132–142 (ETPSTETSPDS) are compositionally biased toward polar residues. S139 and S142 each carry phosphoserine. K151 participates in a covalent cross-link: Glycyl lysine isopeptide (Lys-Gly) (interchain with G-Cter in ubiquitin). Residues 217–234 (VDINLQRPSTNDPTSCCS) are compositionally biased toward polar residues. Residues C232 and C233 are each lipidated (S-geranylgeranyl cysteine).

Belongs to the small GTPase superfamily. Rab family. As to quaternary structure, interacts with ROY1, YIF1, YIP3, YIP4 and YIP5.

The protein localises to the cell membrane. Its subcellular location is the endoplasmic reticulum. Its function is as follows. Required for transport in the endocytic pathway and for correct sorting of the vacuolar hydrolases suggesting a possible intersection of the endocytic with the vacuolar sorting pathway. May be involved in recruiting the MON1-CCZ1 complex to membranes enriched in phosphatidylinositol 3-phosphate (PtdIns[3]P) or other charged lipids, leading to recruitment of YPT7. This Saccharomyces cerevisiae (strain ATCC 204508 / S288c) (Baker's yeast) protein is GTP-binding protein YPT52 (YPT52).